Reading from the N-terminus, the 24-residue chain is Poly-His-poly-Gly peptide 1 (24 aa).

The segment covering glutamate 1–glycine 13 has biased composition (basic residues). Residues glutamate 1–glycine 24 form a disordered region. The segment covering valine 14 to glycine 24 has biased composition (gly residues).

As to expression, expressed by the venom gland.

Its subcellular location is the secreted. Its function is as follows. May serve as a metalloproteinase inhibitor during glandular storage. Their inhibition may be instantly disengaged, by dilution or physiochemical change, when venom is injected into tissue of the victim. The protein is Poly-His-poly-Gly peptide 1 of Atheris chlorechis (Western bush viper).